The following is a 98-amino-acid chain: uncharacterized protein (98 aa).

The 69-residue stretch at 30–98 folds into the MOSC domain; that stretch reads KKVVPSVKIH…RRKFCRVRLE (69 aa).

This is an uncharacterized protein from Haemophilus influenzae (strain ATCC 51907 / DSM 11121 / KW20 / Rd).